The sequence spans 7760 residues: Malpinin synthetase (7760 aa).

2 disordered regions span residues 42-115 (ENPE…VNEK) and 161-180 (LDLP…GDRV). Polar residues predominate over residues 65–79 (TPRSASPLSSYTGSP). The tract at residues 87–389 (TELSRTLSGD…LSLDERTFLL (303 aa)) is condensation 1. The segment covering 164-180 (PTDRPRPSHPSFEGDRV) has biased composition (basic and acidic residues). The tract at residues 409–813 (FEQQAERRPH…GRNDHQVKIR (405 aa)) is adenylation 1. The 75-residue stretch at 926-1000 (PPQGELETAI…AFAHAIGQHR (75 aa)) folds into the Carrier 1 domain. The residue at position 961 (S961) is an O-(pantetheine 4'-phosphoryl)serine. Positions 1046–1477 (QDIYALAPLQ…VLPADERKLL (432 aa)) are dual epimerase/condensation (E/C) domain 1. The tract at residues 1498–1893 (FEQYADRVPN…GRTDYQVKIR (396 aa)) is adenylation 2. The 75-residue stretch at 2003 to 2077 (APEGEVENAI…ALAQSIGEHR (75 aa)) folds into the Carrier 2 domain. Position 2038 is an O-(pantetheine 4'-phosphoryl)serine (S2038). The segment at 2099-2558 (PLIDLNQNDI…LPTEERQLLT (460 aa)) is dual epimerase/condensation (E/C) domain 2. The segment at 2578 to 2973 (FEQHVDRAPD…GRADFQVKIR (396 aa)) is adenylation 3. The region spanning 3083–3157 (APQGAVEAAI…ALAQSIGEHR (75 aa)) is the Carrier 3 domain. S3118 is modified (O-(pantetheine 4'-phosphoryl)serine). The segment at 3203–3634 (QDIYALAPLQ…HLNVLPAEER (432 aa)) is dual epimerase/condensation (E/C) domain 3. The adenylation 4 stretch occupies residues 3658-4057 (FEQQAERTPD…GRNDDQIKIR (400 aa)). The Carrier 4 domain maps to 4174–4248 (APQGEVETAL…AFASRVQEQL (75 aa)). Residue S4209 is modified to O-(pantetheine 4'-phosphoryl)serine. The condensation 2 stretch occupies residues 4267-4705 (LPLSFAQQRL…AAEILSQDER (439 aa)). Positions 4729-5133 (FEQRVESTPD…GRNDHQVKIR (405 aa)) are adenylation 5. The region spanning 5250–5324 (APEGEVETAI…VFAASIGHHQ (75 aa)) is the Carrier 5 domain. Residue S5285 is modified to O-(pantetheine 4'-phosphoryl)serine. The interval 5370–5804 (QDIYSLSPLQ…VLPAEERTLL (435 aa)) is dual dehydration/condensation (C*) domain. An adenylation 6 region spans residues 5825-6224 (FEQQSERTPE…GRNDDQVKIR (400 aa)). The region spanning 6338–6412 (APQGEVETAL…ALAQSIGQHH (75 aa)) is the Carrier 6 domain. Residue S6373 is modified to O-(pantetheine 4'-phosphoryl)serine. A dual epimerase/condensation (E/C) domain 4 region spans residues 6458–6890 (QDIYALSPLQ…QLDTVPAEEH (433 aa)). Positions 6914-7300 (FEHQVERTPA…KFLPDGNVVC (387 aa)) are adenylation 7. The region spanning 7428–7503 (EPRGAIENIL…ELAPRLLATG (76 aa)) is the Carrier 7 domain. At S7463 the chain carries O-(pantetheine 4'-phosphoryl)serine. A thioesterase (TE) domain region spans residues 7561-7722 (DNGNMASSLD…KPYVQGSIEV (162 aa)).

It belongs to the NRP synthetase family.

Heptamodular nonribosomal peptide synthetase that catalyzes the biosynthesis of malpinins, natural products that show biosurfactant activities. Malpinins are acetylated hexapeptides (Ac-D-Leu/Val-D-Arg-D-Leu/Val-L-Phe/Leu-Dhb-D-Trp) containing a non-canonical amino acid derived from dehydration of L-Trp, (Z)-dehydrobutyrine (Dhb), at position 5, as well as a C-terminal D-amino acid, D-tryptophan, that can be oxidized to kynurenine. Incorporated D-amino acids in positions 1, 3 and 4 are variable resulting in the malpinin A-congeners malpinin B to E. Both modules M1 and M3 have relaxed specificity towards aliphatic amino acids (L-Leu &gt; L-Met &gt; L/D-Val &gt; L-Cys), explaining Val at position 1 and 3 in malpinin A-congeners malpinin B to D. The incorporation of L-Leu, but not N-acetyl-L-Leu by module 1 suggests the N-terminal acetylation occurs at a later stage of biosynthesis. Similar to M1 and M3, M4 has a broad substrate spectrum showing the highest activity with L-Phe followed by other hydrophobic amino acids (L-Phe &gt; L-Met = L-Trp). In contrast, M2, M5 and M6 are highly specific for L-Arg, L-Thr, and L-Trp, respectively. Solely, M7 converted its preferred substrate (L-Phe) with a 15 000-fold reduced turnover rate compared to the most active module M6, indicating that its A domain cannot contribute to the malpinin biosynthesis due to low activity. Since the last T domain in malA is apparently not loaded with an amino acid, either the TE domain must offload the oligopeptide from the preceding T domain or the dual E/C domain of M7 must transfer the final peptide chain to the free acceptor T domain of M7 prior to release. The chain is Malpinin synthetase from Mortierella alpina (Oleaginous fungus).